We begin with the raw amino-acid sequence, 119 residues long: Acidic phospholipase A2 natratoxin (119 aa).

7 disulfides stabilise this stretch: C11-C71, C26-C118, C28-C44, C43-C99, C50-C92, C60-C85, and C78-C90. Residues Y27, G29, and G31 each contribute to the Ca(2+) site. Residue H47 is part of the active site. D48 contacts Ca(2+). Residue D93 is part of the active site.

Belongs to the phospholipase A2 family. Group I subfamily. D49 sub-subfamily. The cofactor is Ca(2+). In terms of tissue distribution, expressed by the venom gland.

It localises to the secreted. The catalysed reaction is a 1,2-diacyl-sn-glycero-3-phosphocholine + H2O = a 1-acyl-sn-glycero-3-phosphocholine + a fatty acid + H(+). Its function is as follows. Snake venom phospholipase A2 (PLA2) that has an effectively inhibitory effect on A-type K(+) currents (Kv/KCN) in acutely dissociated rat dorsal root ganglion (DRG) neurons. This inhibitory effect is independent of its enzymatic activity. PLA2 catalyzes the calcium-dependent hydrolysis of the 2-acyl groups in 3-sn-phosphoglycerides. This chain is Acidic phospholipase A2 natratoxin, found in Naja atra (Chinese cobra).